The sequence spans 387 residues: Xylose isomerase (387 aa).

Active-site residues include His-54 and Asp-57. Glu-181, Glu-217, His-220, Asp-245, Asp-255, Asp-257, and Asp-287 together coordinate Mg(2+).

This sequence belongs to the xylose isomerase family. As to quaternary structure, homotetramer. It depends on Mg(2+) as a cofactor.

It localises to the cytoplasm. The catalysed reaction is alpha-D-xylose = alpha-D-xylulofuranose. The chain is Xylose isomerase from Streptomyces coelicolor (strain ATCC BAA-471 / A3(2) / M145).